The following is a 477-amino-acid chain: Probable periplasmic serine endoprotease DegP-like (477 aa).

A signal peptide spans 1–27 (MSIPRLKSYLTMFAAVLMLGQVLTAQA). Residues His-117, Asp-147, and Ser-220 each act as charge relay system in the active site. Substrate-binding positions include 218–220 (GNS) and 275–279 (LGVVI). PDZ domains follow at residues 264–355 (LKKD…IRNG) and 361–466 (DISV…LRQG).

Belongs to the peptidase S1C family.

It localises to the periplasm. It carries out the reaction Acts on substrates that are at least partially unfolded. The cleavage site P1 residue is normally between a pair of hydrophobic residues, such as Val-|-Val.. Its function is as follows. Might be efficient in the degradation of transiently denatured and unfolded proteins which accumulate in the periplasm following stress conditions. The protein is Probable periplasmic serine endoprotease DegP-like of Pseudomonas putida (strain GB-1).